A 443-amino-acid chain; its full sequence is Protein AknT (443 aa).

The protein belongs to the cytochrome P450 family.

In terms of biological role, involved in the biosynthesis of the anthracycline antitumor agent aclacinomycin A. AknT is required for the glycosylation of aklavinone aglycone by AknS to yield aclacinomycin T (rhodosaminyl-aklavinone). In Streptomyces galilaeus, this protein is Protein AknT.